The primary structure comprises 530 residues: AAA-ATPase At3g28510 (530 aa).

A helical transmembrane segment spans residues 5–25; it reads GAIWGITGTTVTSFMFFWAIY. 250–257 is an ATP binding site; that stretch reads GPPGTGKS. Disordered regions lie at residues 312–339 and 463–530; these read QRKK…KVDD and KARK…KSDS. Basic and acidic residues-rich tracts occupy residues 326–339 and 463–511; these read EEKK…KVDD and KARK…KEEN. Polar residues predominate over residues 512-523; that stretch reads GNVSQQNGNSID.

It belongs to the AAA ATPase family. BCS1 subfamily. Requires Mg(2+) as cofactor.

Its subcellular location is the membrane. The catalysed reaction is ATP + H2O = ADP + phosphate + H(+). This chain is AAA-ATPase At3g28510, found in Arabidopsis thaliana (Mouse-ear cress).